Here is a 266-residue protein sequence, read N- to C-terminus: Carboxy-S-adenosyl-L-methionine synthase (266 aa).

The tract at residues 1–24 (MPKRETQSLHDTQQQPGPTAPQRD) is disordered. S-adenosyl-L-methionine contacts are provided by residues Y58, 83 to 85 (GCS), 108 to 109 (DN), 136 to 137 (DI), N151, and R218.

It belongs to the class I-like SAM-binding methyltransferase superfamily. Cx-SAM synthase family. As to quaternary structure, homodimer.

The catalysed reaction is prephenate + S-adenosyl-L-methionine = carboxy-S-adenosyl-L-methionine + 3-phenylpyruvate + H2O. Its function is as follows. Catalyzes the conversion of S-adenosyl-L-methionine (SAM) to carboxy-S-adenosyl-L-methionine (Cx-SAM). This Yersinia enterocolitica serotype O:8 / biotype 1B (strain NCTC 13174 / 8081) protein is Carboxy-S-adenosyl-L-methionine synthase.